Here is a 190-residue protein sequence, read N- to C-terminus: Probable RNA-binding protein 18 (190 aa).

Residues 25-106 form the RRM domain; it reads HRLWIGNLDP…KKLVVRWAHA (82 aa). A disordered region spans residues 166 to 190; sequence VYSYFKPPDKKRTTPYSRTAWKSRR.

The polypeptide is Probable RNA-binding protein 18 (RBM18) (Bos taurus (Bovine)).